The chain runs to 97 residues: Phosphoribosyl-ATP pyrophosphatase (97 aa).

It belongs to the PRA-PH family.

The protein resides in the cytoplasm. It carries out the reaction 1-(5-phospho-beta-D-ribosyl)-ATP + H2O = 1-(5-phospho-beta-D-ribosyl)-5'-AMP + diphosphate + H(+). It functions in the pathway amino-acid biosynthesis; L-histidine biosynthesis; L-histidine from 5-phospho-alpha-D-ribose 1-diphosphate: step 2/9. The polypeptide is Phosphoribosyl-ATP pyrophosphatase (Methanoculleus marisnigri (strain ATCC 35101 / DSM 1498 / JR1)).